The chain runs to 184 residues: Inactive cytochrome P450 monooxygenase lolP2 (184 aa).

The helical transmembrane segment at 10-30 (GIVWLTVAAIAISYILQSSFL) threads the bilayer. Residues 161 to 184 (RRTRGSRPRSRPRWMPARWSRSSP) form a disordered region. Residues 163 to 172 (TRGSRPRSRP) are compositionally biased toward basic residues. Positions 173–184 (RWMPARWSRSSP) are enriched in low complexity.

This sequence belongs to the cytochrome P450 family.

The protein resides in the membrane. Functionally, cytochrome P450 monooxygenase; part of the gene cluster that mediates the biosynthesis of loline alkaloids, potent insecticidal agents composed of a pyrrolizidine ring system and an uncommon ether bridge linking carbons 2 and 7. Lolines are structurally differentiated by the various modifications of the L-amino group and include norloline, loline, N-methylloline, N-acetylloline, N-acetylnorloline, and N-formylloline. The first committed step is the condensation of O-acetyl-L-homoserine (derived from L-aspartic acid) and L-proline, probably catalyzed by the gamma-type pyridoxal 5'-phosphate(PLP)-dependent enzyme lolC, to give the diamino diacid, NACPP. Ensuing cyclization, decarboxylation, and acetylation steps yield 1-exo-acetamidopyrrolizidine (AcAP). LolO is required for installation of the ether bridge upon the pathway intermediate, 1-exo-acetamidopyrrolizidine (AcAP). In sequential 2-oxoglutarate- and O(2)-consuming steps, lolO removes hydrogens from C2 and C7 of AcAP to form both carbon-oxygen bonds in N-acetylnorloline (NANL), the precursor to all other lolines. The enzymes lolD, lolE, lolF and lolT have also been proposed to be involved in the ether-bridge installation. Further processing of the exocyclic moiety of NANL by fungal N-acetamidase (LolN), methyltransferase (LolM), and cytochrome P450 (LolP) enzymes, with occasional involvement of a plant acetyltransferase, generates the other known lolines. LolN transforms NANL to norlonine which is monomethylated and dimethylated to respectively lonine and N-methyllonine (NML) by lolM. LolP catalyzes hydroxylation of the methyl group in N-methylloline (NML) and further oxygenation to N-formylloline (NFL). A plant acetyltransferase is responsible for the acetylation of loline to form N-acetylloline (NAL). LolA might interact with aspartate kinase to prevent feedback inhibition of its activity by these end products and thereby promote production of L-homoserine from L-aspartate. This is Inactive cytochrome P450 monooxygenase lolP2 from Epichloe uncinata (Endophyte fungus).